Consider the following 379-residue polypeptide: Putative acetyl-CoA C-acetyltransferase VraB (379 aa).

Residue cysteine 86 is the Acyl-thioester intermediate of the active site. The Proton acceptor role is filled by histidine 338.

This sequence belongs to the thiolase-like superfamily. Thiolase family.

The protein is Putative acetyl-CoA C-acetyltransferase VraB (vraB) of Staphylococcus aureus (strain MRSA252).